The chain runs to 253 residues: 2-dehydro-3-deoxy-D-gluconate 5-dehydrogenase (253 aa).

14–38 (LITGCDTGLGQGMAVGLAEAGCDIV) is an NAD(+) binding site. Ser145 contacts substrate. Tyr158 acts as the Proton acceptor in catalysis.

This sequence belongs to the short-chain dehydrogenases/reductases (SDR) family.

It carries out the reaction 2-dehydro-3-deoxy-D-gluconate + NAD(+) = 3-deoxy-D-glycero-2,5-hexodiulosonate + NADH + H(+). The protein operates within glycan metabolism; pectin degradation; 2-dehydro-3-deoxy-D-gluconate from pectin: step 5/5. Its function is as follows. Catalyzes the reduction of 2,5-diketo-3-deoxygluconate (DKII or 4,6-dihydroxy-2,5-dioxohexanoate) into 2-keto-3-deoxygluconate (KDG or 2-dehydro-3-deoxygluconate) with a concomitant oxidation of NADH. This is 2-dehydro-3-deoxy-D-gluconate 5-dehydrogenase (kduD) from Dickeya dadantii (strain 3937) (Erwinia chrysanthemi (strain 3937)).